Reading from the N-terminus, the 225-residue chain is Glutathione s-transferase kappa 2 (225 aa).

Residues 15–17, Asn-52, and 200–201 contribute to the glutathione site; these read SPY and SD.

The protein belongs to the GST superfamily. Kappa family. As to expression, expressed in the pharynx, body wall muscles and epidermis. Weaker expression is seen in the intestine.

It is found in the mitochondrion. The catalysed reaction is RX + glutathione = an S-substituted glutathione + a halide anion + H(+). Functionally, has roles in respiratory and lipid metabolism. In Caenorhabditis elegans, this protein is Glutathione s-transferase kappa 2 (gstk-2).